The primary structure comprises 487 residues: N-succinylglutamate 5-semialdehyde dehydrogenase (487 aa).

Residue Gly221–Gly226 coordinates NAD(+). Catalysis depends on residues Glu244 and Cys278.

This sequence belongs to the aldehyde dehydrogenase family. AstD subfamily.

The catalysed reaction is N-succinyl-L-glutamate 5-semialdehyde + NAD(+) + H2O = N-succinyl-L-glutamate + NADH + 2 H(+). It functions in the pathway amino-acid degradation; L-arginine degradation via AST pathway; L-glutamate and succinate from L-arginine: step 4/5. Functionally, catalyzes the NAD-dependent reduction of succinylglutamate semialdehyde into succinylglutamate. The sequence is that of N-succinylglutamate 5-semialdehyde dehydrogenase from Pseudomonas putida (strain GB-1).